We begin with the raw amino-acid sequence, 476 residues long: Glycogen synthase (476 aa).

Lysine 15 contacts ADP-alpha-D-glucose.

It belongs to the glycosyltransferase 1 family. Bacterial/plant glycogen synthase subfamily.

The enzyme catalyses [(1-&gt;4)-alpha-D-glucosyl](n) + ADP-alpha-D-glucose = [(1-&gt;4)-alpha-D-glucosyl](n+1) + ADP + H(+). It functions in the pathway glycan biosynthesis; glycogen biosynthesis. In terms of biological role, synthesizes alpha-1,4-glucan chains using ADP-glucose. The sequence is that of Glycogen synthase from Bacillus cereus (strain ZK / E33L).